The chain runs to 405 residues: Corticosteroid-binding globulin (405 aa).

A signal peptide spans 1–22; that stretch reads MPLLLYTCLLWLPTSGLWTVQA. N-linked (GlcNAc...) asparagine glycosylation is found at Asn31, Asn96, and Asn176. A cortisol-binding site is contributed by Gln254. Asn260 is a glycosylation site (N-linked (GlcNAc...) asparagine). Position 286 (Asn286) interacts with cortisol. N-linked (GlcNAc...) asparagine glycosylation is found at Asn330 and Asn369. Residues His390 and Trp393 each coordinate cortisol.

It belongs to the serpin family. Post-translationally, N-glycosylated; binds 5 oligosaccharide chains. Glycosylation in position Asn-260 is needed for steroid binding. In terms of tissue distribution, plasma; synthesized in liver. Has also been identified in a number of glycocorticoid responsive cells.

Its subcellular location is the secreted. Its function is as follows. Major transport protein for glucocorticoids and progestins in the blood of almost all vertebrate species. The sequence is that of Corticosteroid-binding globulin (SERPINA6) from Homo sapiens (Human).